Here is a 165-residue protein sequence, read N- to C-terminus: Transcription antitermination protein NusB (165 aa).

Belongs to the NusB family.

Its function is as follows. Involved in transcription antitermination. Required for transcription of ribosomal RNA (rRNA) genes. Binds specifically to the boxA antiterminator sequence of the ribosomal RNA (rrn) operons. In Nitratidesulfovibrio vulgaris (strain DSM 19637 / Miyazaki F) (Desulfovibrio vulgaris), this protein is Transcription antitermination protein NusB.